The sequence spans 729 residues: Fatty acid oxidation complex subunit alpha (729 aa).

The interval 1–189 is enoyl-CoA hydratase/isomerase; it reads MLYKGDTLYL…KIGLVDGVVK (189 aa). Asp296 lines the substrate pocket. The 3-hydroxyacyl-CoA dehydrogenase stretch occupies residues 311 to 729; sequence ETPKQAAVLG…ARAVGDLKTA (419 aa). NAD(+)-binding positions include Met324, Asp343, 400-402, Lys407, and Ser429; that span reads VVE. His450 serves as the catalytic For 3-hydroxyacyl-CoA dehydrogenase activity. Residue Asn453 coordinates NAD(+). The substrate site is built by Asn500 and Tyr660.

This sequence in the N-terminal section; belongs to the enoyl-CoA hydratase/isomerase family. It in the C-terminal section; belongs to the 3-hydroxyacyl-CoA dehydrogenase family. As to quaternary structure, heterotetramer of two alpha chains (FadB) and two beta chains (FadA).

It catalyses the reaction a (3S)-3-hydroxyacyl-CoA + NAD(+) = a 3-oxoacyl-CoA + NADH + H(+). It carries out the reaction a (3S)-3-hydroxyacyl-CoA = a (2E)-enoyl-CoA + H2O. The catalysed reaction is a 4-saturated-(3S)-3-hydroxyacyl-CoA = a (3E)-enoyl-CoA + H2O. The enzyme catalyses (3S)-3-hydroxybutanoyl-CoA = (3R)-3-hydroxybutanoyl-CoA. It catalyses the reaction a (3Z)-enoyl-CoA = a 4-saturated (2E)-enoyl-CoA. It carries out the reaction a (3E)-enoyl-CoA = a 4-saturated (2E)-enoyl-CoA. It functions in the pathway lipid metabolism; fatty acid beta-oxidation. Involved in the aerobic and anaerobic degradation of long-chain fatty acids via beta-oxidation cycle. Catalyzes the formation of 3-oxoacyl-CoA from enoyl-CoA via L-3-hydroxyacyl-CoA. It can also use D-3-hydroxyacyl-CoA and cis-3-enoyl-CoA as substrate. The sequence is that of Fatty acid oxidation complex subunit alpha from Escherichia fergusonii (strain ATCC 35469 / DSM 13698 / CCUG 18766 / IAM 14443 / JCM 21226 / LMG 7866 / NBRC 102419 / NCTC 12128 / CDC 0568-73).